The chain runs to 580 residues: E3 ubiquitin-protein ligase TRIM45 (580 aa).

The RING-type zinc finger occupies 29 to 98; sequence CPTCLRLFKV…QIGILCPVCD (70 aa). 2 B box-type zinc fingers span residues 130–176 and 186–227; these read GQGL…MVDL and GKPI…YDFT. The Zn(2+) site is built by Cys-135, Cys-138, Cys-158, His-162, Cys-191, His-194, Cys-214, and His-219. Residues 249–329 are a coiled coil; sequence VEALEDALAQ…LLADMRTGVE (81 aa). A Filamin repeat occupies 394-497; it reads TQEVDPAQCV…VQGSPFNVTV (104 aa).

The protein belongs to the TRIM/RBCC family.

Its subcellular location is the cytoplasm. It is found in the nucleus. The catalysed reaction is S-ubiquitinyl-[E2 ubiquitin-conjugating enzyme]-L-cysteine + [acceptor protein]-L-lysine = [E2 ubiquitin-conjugating enzyme]-L-cysteine + N(6)-ubiquitinyl-[acceptor protein]-L-lysine.. Its function is as follows. E3 ubiquitin-protein ligase that plays a role in the regulation of inflammatory response. Mechanistically, mediates the 'Lys-48'-linked polyubiquitination of TAB2, a regulatory protein of the kinase TAK1, leading to its degradation via the proteasomal pathway and inhibition of the TLR-mediated inflammatory immune response. May act as a transcriptional repressor in mitogen-activated protein kinase signaling pathway. This Mus musculus (Mouse) protein is E3 ubiquitin-protein ligase TRIM45 (Trim45).